Reading from the N-terminus, the 969-residue chain is Protein translocase subunit SecA (969 aa).

Residues Gln-99, 117-121 (GEGKT), and Asp-631 each bind ATP.

It belongs to the SecA family. As to quaternary structure, monomer and homodimer. Part of the essential Sec protein translocation apparatus which comprises SecA, SecYEG and auxiliary proteins SecDF. Other proteins may also be involved.

The protein localises to the cell inner membrane. The protein resides in the cytoplasm. The enzyme catalyses ATP + H2O + cellular proteinSide 1 = ADP + phosphate + cellular proteinSide 2.. Functionally, part of the Sec protein translocase complex. Interacts with the SecYEG preprotein conducting channel. Has a central role in coupling the hydrolysis of ATP to the transfer of proteins into and across the cell membrane, serving as an ATP-driven molecular motor driving the stepwise translocation of polypeptide chains across the membrane. This chain is Protein translocase subunit SecA, found in Chlamydia trachomatis serovar D (strain ATCC VR-885 / DSM 19411 / UW-3/Cx).